The sequence spans 163 residues: NADH-quinone oxidoreductase subunit I (163 aa).

2 consecutive 4Fe-4S ferredoxin-type domains span residues 54–84 (LRRY…IESD) and 94–123 (TRYD…ETHI). Positions 64, 67, 70, 74, 103, 106, 109, and 113 each coordinate [4Fe-4S] cluster.

It belongs to the complex I 23 kDa subunit family. NDH-1 is composed of 14 different subunits. Subunits NuoA, H, J, K, L, M, N constitute the membrane sector of the complex. Requires [4Fe-4S] cluster as cofactor.

It localises to the cell inner membrane. It catalyses the reaction a quinone + NADH + 5 H(+)(in) = a quinol + NAD(+) + 4 H(+)(out). NDH-1 shuttles electrons from NADH, via FMN and iron-sulfur (Fe-S) centers, to quinones in the respiratory chain. The immediate electron acceptor for the enzyme in this species is believed to be ubiquinone. Couples the redox reaction to proton translocation (for every two electrons transferred, four hydrogen ions are translocated across the cytoplasmic membrane), and thus conserves the redox energy in a proton gradient. In Cupriavidus metallidurans (strain ATCC 43123 / DSM 2839 / NBRC 102507 / CH34) (Ralstonia metallidurans), this protein is NADH-quinone oxidoreductase subunit I.